The sequence spans 332 residues: Ketol-acid reductoisomerase (NADP(+)) (332 aa).

In terms of domain architecture, KARI N-terminal Rossmann spans 1–182; the sequence is MAQTWKDTDI…GSARAGLIKT (182 aa). Residues 25-28, Lys-48, Ser-53, and 83-86 each bind NADP(+); these read YGIQ and DMIQ. Residue His-108 is part of the active site. An NADP(+)-binding site is contributed by Gly-134. Positions 183-329 constitute a KARI C-terminal knotted domain; that stretch reads AFKEEVETDW…KEMRKMMWPD (147 aa). The Mg(2+) site is built by Asp-191, Glu-195, Glu-227, and Glu-231. Substrate is bound at residue Ser-252.

This sequence belongs to the ketol-acid reductoisomerase family. Mg(2+) serves as cofactor.

It carries out the reaction (2R)-2,3-dihydroxy-3-methylbutanoate + NADP(+) = (2S)-2-acetolactate + NADPH + H(+). The enzyme catalyses (2R,3R)-2,3-dihydroxy-3-methylpentanoate + NADP(+) = (S)-2-ethyl-2-hydroxy-3-oxobutanoate + NADPH + H(+). Its pathway is amino-acid biosynthesis; L-isoleucine biosynthesis; L-isoleucine from 2-oxobutanoate: step 2/4. It functions in the pathway amino-acid biosynthesis; L-valine biosynthesis; L-valine from pyruvate: step 2/4. Involved in the biosynthesis of branched-chain amino acids (BCAA). Catalyzes an alkyl-migration followed by a ketol-acid reduction of (S)-2-acetolactate (S2AL) to yield (R)-2,3-dihydroxy-isovalerate. In the isomerase reaction, S2AL is rearranged via a Mg-dependent methyl migration to produce 3-hydroxy-3-methyl-2-ketobutyrate (HMKB). In the reductase reaction, this 2-ketoacid undergoes a metal-dependent reduction by NADPH to yield (R)-2,3-dihydroxy-isovalerate. This chain is Ketol-acid reductoisomerase (NADP(+)), found in Nitrosopumilus maritimus (strain SCM1).